The primary structure comprises 750 residues: Photosystem I P700 chlorophyll a apoprotein A1 (750 aa).

8 helical membrane passes run 70-93 (IFSA…FHGA), 156-179 (LYCT…FHYH), 195-219 (LNHH…HVSL), 291-309 (TAHH…GHMY), 346-369 (WHAQ…HHMY), 385-411 (LSLF…IFMV), 433-455 (AIIS…LYIH), and 531-549 (FLVH…LILL). Positions 573 and 582 each coordinate [4Fe-4S] cluster. The next 2 membrane-spanning stretches (helical) occupy residues 589–610 (HVFL…HFSW) and 664–686 (LSAY…MFLF). Histidine 675 contacts chlorophyll a'. Chlorophyll a is bound by residues methionine 683 and tyrosine 691. Tryptophan 692 is a phylloquinone binding site. Residues 724-744 (AVGVTHYLLGGIATTWAFFLA) form a helical membrane-spanning segment.

This sequence belongs to the PsaA/PsaB family. The PsaA/B heterodimer binds the P700 chlorophyll special pair and subsequent electron acceptors. PSI consists of a core antenna complex that captures photons, and an electron transfer chain that converts photonic excitation into a charge separation. The eukaryotic PSI reaction center is composed of at least 11 subunits. The cofactor is P700 is a chlorophyll a/chlorophyll a' dimer, A0 is one or more chlorophyll a, A1 is one or both phylloquinones and FX is a shared 4Fe-4S iron-sulfur center..

The protein localises to the plastid. The protein resides in the chloroplast thylakoid membrane. The enzyme catalyses reduced [plastocyanin] + hnu + oxidized [2Fe-2S]-[ferredoxin] = oxidized [plastocyanin] + reduced [2Fe-2S]-[ferredoxin]. Its function is as follows. PsaA and PsaB bind P700, the primary electron donor of photosystem I (PSI), as well as the electron acceptors A0, A1 and FX. PSI is a plastocyanin-ferredoxin oxidoreductase, converting photonic excitation into a charge separation, which transfers an electron from the donor P700 chlorophyll pair to the spectroscopically characterized acceptors A0, A1, FX, FA and FB in turn. Oxidized P700 is reduced on the lumenal side of the thylakoid membrane by plastocyanin. The sequence is that of Photosystem I P700 chlorophyll a apoprotein A1 from Spinacia oleracea (Spinach).